We begin with the raw amino-acid sequence, 210 residues long: Methylthioribulose-1-phosphate dehydratase (210 aa).

Residues H94 and H96 each coordinate Zn(2+).

The protein belongs to the aldolase class II family. MtnB subfamily. It depends on Zn(2+) as a cofactor.

It carries out the reaction 5-(methylsulfanyl)-D-ribulose 1-phosphate = 5-methylsulfanyl-2,3-dioxopentyl phosphate + H2O. Its pathway is amino-acid biosynthesis; L-methionine biosynthesis via salvage pathway; L-methionine from S-methyl-5-thio-alpha-D-ribose 1-phosphate: step 2/6. Catalyzes the dehydration of methylthioribulose-1-phosphate (MTRu-1-P) into 2,3-diketo-5-methylthiopentyl-1-phosphate (DK-MTP-1-P). In Yersinia enterocolitica serotype O:8 / biotype 1B (strain NCTC 13174 / 8081), this protein is Methylthioribulose-1-phosphate dehydratase.